A 303-amino-acid polypeptide reads, in one-letter code: Sulfate adenylyltransferase subunit 2 (303 aa).

A disordered region spans residues 282–303; it reads SGRLIDHDESGSMEKKKREGYF.

Belongs to the PAPS reductase family. CysD subfamily. Heterodimer composed of CysD, the smaller subunit, and CysN.

It catalyses the reaction sulfate + ATP + H(+) = adenosine 5'-phosphosulfate + diphosphate. It functions in the pathway sulfur metabolism; hydrogen sulfide biosynthesis; sulfite from sulfate: step 1/3. Its function is as follows. With CysN forms the ATP sulfurylase (ATPS) that catalyzes the adenylation of sulfate producing adenosine 5'-phosphosulfate (APS) and diphosphate, the first enzymatic step in sulfur assimilation pathway. APS synthesis involves the formation of a high-energy phosphoric-sulfuric acid anhydride bond driven by GTP hydrolysis by CysN coupled to ATP hydrolysis by CysD. The chain is Sulfate adenylyltransferase subunit 2 from Maricaulis maris (strain MCS10) (Caulobacter maris).